The following is a 1067-amino-acid chain: Kinesin-like protein KIF11-B (1067 aa).

The Kinesin motor domain occupies 18-359 (NIQVVVRCRP…LDYANRAKSI (342 aa)). Position 105–112 (105–112 (GQTGTGKT)) interacts with ATP. Residues 365 to 480 (VNQKLTKKAL…SKEQLAQESF (116 aa)) are a coiled coil. T937 is modified (phosphothreonine; by CDK1). S1046 is subject to Phosphoserine; by NEK6.

Belongs to the TRAFAC class myosin-kinesin ATPase superfamily. Kinesin family. BimC subfamily. In terms of assembly, heterotetramer of two heavy and two light chains. Interacts with aurka. Phosphorylation of Thr-937 during mitosis controls the association of this protein with the spindle apparatus. In terms of processing, a subset of this protein primarily localized at the spindle pole is phosphorylated by NEK6 during mitosis. Post-translationally, phosphorylated on a serine residue by aurka. In unfertilized eggs, shows highest expression in the germinal vesicle and radial yolk-poor channels. Also present in testis.

The protein resides in the cytoplasm. It localises to the cytoskeleton. The protein localises to the spindle pole. Functionally, plus end-directed motor protein required for establishing a bipolar spindle. Associates with both interphase and spindle microtubules. May be involved in nuclear divisions taking place during the development of unfertilized eggs. Required in non-mitotic cells for transport of secretory proteins from the Golgi complex to the cell surface. This chain is Kinesin-like protein KIF11-B (kif11-b), found in Xenopus laevis (African clawed frog).